Here is a 985-residue protein sequence, read N- to C-terminus: Probable oxidoreductase YjgC (985 aa).

Positions 3 to 79 (GKKTITINGV…GDVIDTLSPD (77 aa)) constitute a 2Fe-2S ferredoxin-type domain. [2Fe-2S] cluster contacts are provided by Cys-37, Cys-48, Cys-51, and Cys-63. The 4Fe-4S His(Cys)3-ligated-type domain occupies 79-119 (DVKKAQVIGMDKILYNHELYCTVCDYNNGGCEIHNTVKEMK). Residues His-95, Cys-99, Cys-102, Cys-109, Cys-148, Cys-151, Cys-154, Cys-158, Cys-191, Cys-194, Cys-197, Cys-201, Cys-265, Cys-268, Cys-272, and Cys-300 each coordinate [4Fe-4S] cluster. 2 consecutive 4Fe-4S ferredoxin-type domains span residues 139-170 (PFYRYDPDQCILCGRCVEACQDVQVTETLTID) and 182-211 (NDVPINESSCVSCGHCSTVCPCNAMMEKGM). In terms of domain architecture, 4Fe-4S Mo/W bis-MGD-type spans 258-314 (IKKTKTVCTYCGVGCSFDVWTKGRDILKVEPQEEAPANGISTCVKGKFGWDFVNSEE).

The protein in the C-terminal section; belongs to the prokaryotic molybdopterin-containing oxidoreductase family. It depends on [2Fe-2S] cluster as a cofactor. Requires [4Fe-4S] cluster as cofactor. The cofactor is Mo-bis(molybdopterin guanine dinucleotide).

The polypeptide is Probable oxidoreductase YjgC (yjgC) (Bacillus subtilis (strain 168)).